The chain runs to 382 residues: Intermediate transcription factor 3 large subunit (382 aa).

The protein belongs to the poxviruses A23 family. In terms of assembly, heterodimer of a 45 kDa and a 32 kDa subunit.

Functionally, acts with RNA polymerase to initiate transcription from intermediate gene promoters. The sequence is that of Intermediate transcription factor 3 large subunit (VITF3L) from Camelus.